We begin with the raw amino-acid sequence, 195 residues long: Imidazoleglycerol-phosphate dehydratase (195 aa).

This sequence belongs to the imidazoleglycerol-phosphate dehydratase family.

The protein resides in the cytoplasm. The catalysed reaction is D-erythro-1-(imidazol-4-yl)glycerol 3-phosphate = 3-(imidazol-4-yl)-2-oxopropyl phosphate + H2O. The protein operates within amino-acid biosynthesis; L-histidine biosynthesis; L-histidine from 5-phospho-alpha-D-ribose 1-diphosphate: step 6/9. This is Imidazoleglycerol-phosphate dehydratase from Methanosphaerula palustris (strain ATCC BAA-1556 / DSM 19958 / E1-9c).